The chain runs to 255 residues: Ribonuclease PH (255 aa).

Phosphate contacts are provided by residues Arg86 and 124-126; that span reads GTR.

Belongs to the RNase PH family. In terms of assembly, homohexameric ring arranged as a trimer of dimers.

It carries out the reaction tRNA(n+1) + phosphate = tRNA(n) + a ribonucleoside 5'-diphosphate. Phosphorolytic 3'-5' exoribonuclease that plays an important role in tRNA 3'-end maturation. Removes nucleotide residues following the 3'-CCA terminus of tRNAs; can also add nucleotides to the ends of RNA molecules by using nucleoside diphosphates as substrates, but this may not be physiologically important. Probably plays a role in initiation of 16S rRNA degradation (leading to ribosome degradation) during starvation. In Geobacillus sp. (strain WCH70), this protein is Ribonuclease PH.